Reading from the N-terminus, the 185-residue chain is Ribosome-recycling factor (185 aa).

The protein belongs to the RRF family.

The protein localises to the cytoplasm. Its function is as follows. Responsible for the release of ribosomes from messenger RNA at the termination of protein biosynthesis. May increase the efficiency of translation by recycling ribosomes from one round of translation to another. In Corynebacterium diphtheriae (strain ATCC 700971 / NCTC 13129 / Biotype gravis), this protein is Ribosome-recycling factor.